Consider the following 366-residue polypeptide: RNA 3'-terminal phosphate cyclase (366 aa).

6 residues coordinate ATP: Gln104, Pro131, Tyr294, Asp297, Gln298, and His320. The active-site Tele-AMP-histidine intermediate is His320.

This sequence belongs to the RNA 3'-terminal cyclase family. Type 1 subfamily.

Its subcellular location is the nucleus. The protein resides in the nucleoplasm. The catalysed reaction is a 3'-end 3'-phospho-ribonucleotide-RNA + ATP = a 3'-end 2',3'-cyclophospho-ribonucleotide-RNA + AMP + diphosphate. In terms of biological role, catalyzes the conversion of 3'-phosphate to a 2',3'-cyclic phosphodiester at the end of RNA. The mechanism of action of the enzyme occurs in 3 steps: (A) adenylation of the enzyme by ATP; (B) transfer of adenylate to an RNA-N3'P to produce RNA-N3'PP5'A; (C) and attack of the adjacent 2'-hydroxyl on the 3'-phosphorus in the diester linkage to produce the cyclic end product. Likely functions in some aspects of cellular RNA processing. Function plays an important role in regulating axon regeneration by inhibiting central nervous system (CNS) axon regeneration following optic nerve injury. In Bos taurus (Bovine), this protein is RNA 3'-terminal phosphate cyclase (RTCA).